The sequence spans 372 residues: Cyclin-dependent kinase 9 (372 aa).

The Protein kinase domain maps to 19-315; the sequence is YEKLAKIGQG…SDDALNHDFF (297 aa). 25–33 lines the ATP pocket; it reads IGQGTFGEV. Lys-44 carries the N6-acetyllysine; by EP300/CBP, PCAF/KAT2B and GCN5/KAT2A modification. ATP-binding positions include Lys-48 and 104 to 106; that span reads DFC. N6-acetyllysine; by PCAF/KAT2B and GCN5/KAT2A is present on Lys-48. Asp-149 serves as the catalytic Proton acceptor. Positions 166-191 are T-loop; the sequence is ADFGLARAFSLAKNSQPNRYTNRVVT. Asp-167 is an ATP binding site. Phosphoserine is present on Ser-175. Thr-186 carries the post-translational modification Phosphothreonine; by CaMK1D. The segment at 343 to 372 is disordered; that stretch reads RRKGSQITQQSTNQSRNPATTNQTEFERVF. Residue Ser-347 is modified to Phosphoserine; by CDK9 and PKA. Over residues 347–366 the composition is skewed to polar residues; the sequence is SQITQQSTNQSRNPATTNQT. The residue at position 350 (Thr-350) is a Phosphothreonine; by CDK9. Ser-353 bears the Phosphoserine; by CDK9 mark. Residue Thr-354 is modified to Phosphothreonine; by CDK9. Ser-357 bears the Phosphoserine; by CDK9 mark. Thr-362 and Thr-363 each carry phosphothreonine; by CDK9.

Belongs to the protein kinase superfamily. CMGC Ser/Thr protein kinase family. CDC2/CDKX subfamily. In terms of assembly, component of the super elongation complex (SEC), at least composed of EAF1, EAF2, CDK9, MLLT3/AF9, AFF (AFF1 or AFF4), the P-TEFb complex and ELL (ELL, ELL2 or ELL3). Associates with CCNT1/cyclin-T1, CCNT2/cyclin-T2 (isoform A and isoform B) or CCNK/cyclin-K to form active P-TEFb. P-TEFb forms a complex with AFF4/AF5Q31 and is part of the super elongation complex (SEC). Component of a complex which is composed of at least 5 members: HTATSF1/Tat-SF1, P-TEFb complex, RNA pol II, SUPT5H, and NCL/nucleolin. Associates with UBR5 and forms a transcription regulatory complex composed of CDK9, RNAP II, UBR5 and TFIIS/TCEA1 that can stimulate target gene transcription (e.g. gamma fibrinogen/FGG) by recruiting their promoters. Component of the 7SK snRNP inactive complex which is composed of at least 8 members: P-TEFb (composed of CDK9 and CCNT1/cyclin-T1), HEXIM1, HEXIM2, LARP7, BCDIN3, SART3 proteins and 7SK and U6 snRNAs. This inactive 7SK snRNP complex can also interact with NCOR1 and HDAC3, probably to regulate CDK9 acetylation. Release of P-TEFb from P-TEFb/7SK snRNP complex requires both PP2B to transduce calcium Ca(2+) signaling in response to stimuli (e.g. UV or hexamethylene bisacetamide (HMBA)), and PPP1CA to dephosphorylate Thr-186. This released P-TEFb remains inactive in the pre-initiation complex with BRD4 until new Thr-186 phosphorylation occurs after the synthesis of a short RNA. Interacts with BRD4; to target chromatin binding. Interacts with JMJD6. Interacts with activated nuclear STAT3 and RELA/p65. Binds to AR and MYOD1. Forms a complex composed of CDK9, CCNT1/cyclin-T1, EP300 and GATA4 that stimulates hypertrophy in cardiomyocytes. The large PER complex involved in the repression of transcriptional termination is composed of at least PER2, CDK9, DDX5, DHX9, NCBP1 and POLR2A (active). Interacts with HSF1. Interacts with TBX21. Interacts with WDR43. Interacts with ZMYND8; the association appears to occur between homodimeric ZMYND8 and the activated form of the P-TEFb complex. Autophosphorylation at Thr-186, Ser-347, Thr-350, Ser-353, Thr-354 and Ser-357 triggers kinase activity by promoting cyclin and substrate binding upon conformational changes. Thr-186 phosphorylation requires the calcium Ca(2+) signaling pathway, including CaMK1D and calmodulin. This inhibition is relieved by Thr-29 dephosphorylation. Phosphorylation at Ser-175 inhibits kinase activity. Can be phosphorylated on either Thr-362 or Thr-363 but not on both simultaneously. In terms of processing, dephosphorylation of Thr-186 by PPM1A and PPM1B blocks CDK9 activity and may lead to CDK9 proteasomal degradation. However, PPP1CA-mediated Thr-186 dephosphorylation is required to release P-TEFb from its inactive P-TEFb/7SK snRNP complex. Dephosphorylated at Ser-347 by the PNUTS-PP1 complex during RNA polymerase II transcription pause-release. Dephosphorylation of C-terminus Thr and Ser residues by protein phosphatase-1 (PP1) triggers CDK9 activity. Post-translationally, N6-acetylation of Lys-44 promotes kinase activity, whereas acetylation of both Lys-44 and Lys-48 mediated by PCAF/KAT2B and GCN5/KAT2A reduces kinase activity. The acetylated form associates with PML bodies in the nuclear matrix and with the transcriptionally silent HIV-1 genome; deacetylated upon transcription stimulation. Deacetylated by SIRT7, promoting the kinase activity and subsequent 'Ser-2' phosphorylation of the C-terminal domain (CTD) of RNA polymerase II. Polyubiquitinated and thus activated by UBR5. This ubiquitination is promoted by TFIIS/TCEA1 and favors 'Ser-2' phosphorylation of RPB1/POLR2A CTD. In terms of tissue distribution, expressed at high levels in brain and kidney.

The protein localises to the nucleus. The protein resides in the cytoplasm. It localises to the PML body. It carries out the reaction L-seryl-[protein] + ATP = O-phospho-L-seryl-[protein] + ADP + H(+). The enzyme catalyses L-threonyl-[protein] + ATP = O-phospho-L-threonyl-[protein] + ADP + H(+). It catalyses the reaction [DNA-directed RNA polymerase] + ATP = phospho-[DNA-directed RNA polymerase] + ADP + H(+). With respect to regulation, activation by Thr-186 phosphorylation is calcium Ca(2+) signaling pathway-dependent; actively inactivated by dephosphorylation mediated by PPP1CA, PPM1A and PPM1B. Reversibly repressed by acetylation at Lys-44 and Lys-48. Protein kinase involved in the regulation of transcription. Member of the cyclin-dependent kinase pair (CDK9/cyclin-T) complex, also called positive transcription elongation factor b (P-TEFb), which facilitates the transition from abortive to productive elongation by phosphorylating the CTD (C-terminal domain) of the large subunit of RNA polymerase II (RNAP II) POLR2A, SUPT5H and RDBP. This complex is inactive when in the 7SK snRNP complex form. Phosphorylates EP300, MYOD1, RPB1/POLR2A and AR and the negative elongation factors DSIF and NELFE. Regulates cytokine inducible transcription networks by facilitating promoter recognition of target transcription factors (e.g. TNF-inducible RELA/p65 activation and IL-6-inducible STAT3 signaling). Promotes RNA synthesis in genetic programs for cell growth, differentiation and viral pathogenesis. P-TEFb is also involved in cotranscriptional histone modification, mRNA processing and mRNA export. Modulates a complex network of chromatin modifications including histone H2B monoubiquitination (H2Bub1), H3 lysine 4 trimethylation (H3K4me3) and H3K36me3; integrates phosphorylation during transcription with chromatin modifications to control co-transcriptional histone mRNA processing. The CDK9/cyclin-K complex has also a kinase activity towards CTD of RNAP II and can substitute for CDK9/cyclin-T P-TEFb in vitro. Replication stress response protein; the CDK9/cyclin-K complex is required for genome integrity maintenance, by promoting cell cycle recovery from replication arrest and limiting single-stranded DNA amount in response to replication stress, thus reducing the breakdown of stalled replication forks and avoiding DNA damage. In addition, probable function in DNA repair of isoform 2 via interaction with KU70/XRCC6. Promotes cardiac myocyte enlargement. RPB1/POLR2A phosphorylation on 'Ser-2' in CTD activates transcription. AR phosphorylation modulates AR transcription factor promoter selectivity and cell growth. DSIF and NELF phosphorylation promotes transcription by inhibiting their negative effect. The phosphorylation of MYOD1 enhances its transcriptional activity and thus promotes muscle differentiation. Catalyzes phosphorylation of KAT5, promoting KAT5 recruitment to chromatin and histone acetyltransferase activity. The chain is Cyclin-dependent kinase 9 (Cdk9) from Mus musculus (Mouse).